The primary structure comprises 440 residues: Chromosome partition protein MukF (440 aa).

The leucine-zipper stretch occupies residues 208–236; it reads LDETSGNLRELQDTLNAAGDKLQSQLLRI.

Belongs to the MukF family. As to quaternary structure, interacts, and probably forms a ternary complex, with MukE and MukB via its C-terminal region. The complex formation is stimulated by calcium or magnesium. It is required for an interaction between MukE and MukB.

It localises to the cytoplasm. The protein resides in the nucleoid. Its function is as follows. Involved in chromosome condensation, segregation and cell cycle progression. May participate in facilitating chromosome segregation by condensation DNA from both sides of a centrally located replisome during cell division. Not required for mini-F plasmid partitioning. Probably acts via its interaction with MukB and MukE. Overexpression results in anucleate cells. It has a calcium binding activity. The polypeptide is Chromosome partition protein MukF (Histophilus somni (strain 129Pt) (Haemophilus somnus)).